We begin with the raw amino-acid sequence, 491 residues long: uncharacterized protein (491 aa).

Tryptophan 99 is a binding site for substrate. Residue asparagine 137 coordinates Ca(2+). Histidine 138 serves as a coordination point for substrate. Ca(2+)-binding residues include glutamate 177 and aspartate 190. Arginine 219 lines the substrate pocket. Residues aspartate 221, histidine 225, and glutamate 245 each contribute to the Ca(2+) site. Residue aspartate 221 is the Nucleophile of the active site. 224–225 (KH) is a substrate binding site. Glutamate 245 functions as the Proton donor in the catalytic mechanism. Positions 249, 312, and 360 each coordinate substrate.

It belongs to the glycosyl hydrolase 13 family. Ca(2+) is required as a cofactor.

The protein localises to the cytoplasm. The protein resides in the nucleus. This is an uncharacterized protein from Schizosaccharomyces pombe (strain 972 / ATCC 24843) (Fission yeast).